A 377-amino-acid chain; its full sequence is Nitric oxide reductase FlRd-NAD(+) reductase (377 aa).

Belongs to the FAD-dependent oxidoreductase family. The cofactor is FAD.

Its subcellular location is the cytoplasm. The enzyme catalyses 2 reduced [nitric oxide reductase rubredoxin domain] + NAD(+) + H(+) = 2 oxidized [nitric oxide reductase rubredoxin domain] + NADH. It participates in nitrogen metabolism; nitric oxide reduction. In terms of biological role, one of at least two accessory proteins for anaerobic nitric oxide (NO) reductase. Reduces the rubredoxin moiety of NO reductase. This is Nitric oxide reductase FlRd-NAD(+) reductase from Escherichia coli O157:H7.